Reading from the N-terminus, the 510-residue chain is 2,3-bisphosphoglycerate-independent phosphoglycerate mutase (510 aa).

Residues Asp-12 and Ser-62 each coordinate Mn(2+). The active-site Phosphoserine intermediate is Ser-62. Substrate-binding positions include His-123, 153-154, Arg-185, Arg-191, 261-264, and Lys-336; these read RD and RPDR. The Mn(2+) site is built by Asp-403, His-407, Asp-444, His-445, and His-462.

The protein belongs to the BPG-independent phosphoglycerate mutase family. Monomer. Mn(2+) is required as a cofactor.

It carries out the reaction (2R)-2-phosphoglycerate = (2R)-3-phosphoglycerate. Its pathway is carbohydrate degradation; glycolysis; pyruvate from D-glyceraldehyde 3-phosphate: step 3/5. In terms of biological role, essential for rapid growth and for sporulation. Catalyzes the interconversion of 2-phosphoglycerate and 3-phosphoglycerate. The chain is 2,3-bisphosphoglycerate-independent phosphoglycerate mutase from Priestia megaterium (strain DSM 319 / IMG 1521) (Bacillus megaterium).